The sequence spans 206 residues: Elongation factor 1-beta (206 aa).

A2 carries the post-translational modification N-acetylalanine. Residue K13 forms a Glycyl lysine isopeptide (Lys-Gly) (interchain with G-Cter in ubiquitin) linkage. A phosphoserine mark is found at S31 and S86.

The protein belongs to the EF-1-beta/EF-1-delta family. The eukaryotic elongation factor 1 complex (eEF1) is probably a heterohexamer. Two trimeric complexes, each composed of eEF1A (TEF1 or TEF2), eEF1Balpha (EFB1) and eEF1Bgamma (CAM1 or TEF4), are probably dimerized via the eF1Bgamma subunits. eEF1Balpha interacts directly with eEF1A. eEF1Balpha and eEF1Bgamma form the eEF1B subcomplex with the GEF activity. Post-translationally, S-thiolated in response to oxidative stress, probably inhibiting the protein and causing a reduction in protein synthesis.

The protein operates within protein biosynthesis; polypeptide chain elongation. Functionally, catalytic subunit of the guanine nucleotide exchange factor (GEF) (eEF1B subcomplex) of the eukaryotic elongation factor 1 complex (eEF1). Stimulates the exchange of GDP for GTP on elongation factor 1A (eEF1A), probably by displacing GDP from the nucleotide binding pocket in eEF1A. The 30-fold higher concentration of GTP compared to GDP in cells favors the formation of eEF1A-GTP, which rapidly forms a ternary complex with aminoacyl-tRNA that in turn displaces eEF1B from the complex. This chain is Elongation factor 1-beta (EFB1), found in Saccharomyces cerevisiae (strain ATCC 204508 / S288c) (Baker's yeast).